Reading from the N-terminus, the 654-residue chain is Glutamyl-tRNA(Gln) amidotransferase subunit B, mitochondrial (654 aa).

Residues 1–8 constitute a mitochondrion transit peptide; sequence MGRIPTRE. A disordered region spans residues 79–101; it reads DQAKASKAQAKGKKKRSSADNQT.

This sequence belongs to the GatB/GatE family. GatB subfamily. Subunit of the heterotrimeric GatCAB amidotransferase (AdT) complex, composed of A, B and C subunits.

Its subcellular location is the mitochondrion. It catalyses the reaction L-glutamyl-tRNA(Gln) + L-glutamine + ATP + H2O = L-glutaminyl-tRNA(Gln) + L-glutamate + ADP + phosphate + H(+). Allows the formation of correctly charged Gln-tRNA(Gln) through the transamidation of misacylated Glu-tRNA(Gln) in the mitochondria. The reaction takes place in the presence of glutamine and ATP through an activated gamma-phospho-Glu-tRNA(Gln). In Pyricularia oryzae (strain 70-15 / ATCC MYA-4617 / FGSC 8958) (Rice blast fungus), this protein is Glutamyl-tRNA(Gln) amidotransferase subunit B, mitochondrial.